The sequence spans 426 residues: D-tagatose-1,6-bisphosphate aldolase subunit KbaZ (426 aa).

It belongs to the GatZ/KbaZ family. KbaZ subfamily. As to quaternary structure, forms a complex with KbaY.

Its pathway is carbohydrate metabolism; D-tagatose 6-phosphate degradation; D-glyceraldehyde 3-phosphate and glycerone phosphate from D-tagatose 6-phosphate: step 2/2. Component of the tagatose-1,6-bisphosphate aldolase KbaYZ that is required for full activity and stability of the Y subunit. Could have a chaperone-like function for the proper and stable folding of KbaY. When expressed alone, KbaZ does not show any aldolase activity. This chain is D-tagatose-1,6-bisphosphate aldolase subunit KbaZ, found in Escherichia coli O127:H6 (strain E2348/69 / EPEC).